Here is a 577-residue protein sequence, read N- to C-terminus: Secreted LysM effector Lys4 (577 aa).

A signal peptide spans 1–19 (MRALTAAVLFVAGLTPVLA). The LysM 1 domain occupies 38-85 (AWYTIVKGDGCDTVEKKFKITPEQFFKWNPDVSTDCVKNFWVGNSYCV). A compositionally biased stretch (low complexity) spans 96-121 (TSTTVKSSSTTQKTSSTSSKLSSSSK). A disordered region spans residues 96–135 (TSTTVKSSSTTQKTSSTSSKLSSSSKPVNTTTTPYSTRNP). Positions 122–135 (PVNTTTTPYSTRNP) are enriched in polar residues. N-linked (GlcNAc...) asparagine glycosylation is found at Asn-124, Asn-140, Asn-216, and Asn-235. LysM domains are found at residues 251–298 (NFYQ…YYCV), 328–375 (KWYQ…WYCV), and 408–455 (QYWL…YVCV). Residues 464–485 (SGSTTTITGPPTKGSNPPTTTT) show a composition bias toward low complexity. A disordered region spans residues 464-490 (SGSTTTITGPPTKGSNPPTTTTSGGGG). The 49-residue stretch at 510 to 558 (FWFRGKDGASLFCADIAKDAGVSLPDFLKWNPGVGSNCESLWADTWYCV) folds into the LysM 5 domain.

Belongs to the secreted LysM effector family.

In terms of biological role, might have a role in sequestration of chitin oligosaccharides (breakdown products of fungal cell walls that are released during invasion and act as triggers of host immunity) to dampen host defense. The sequence is that of Secreted LysM effector Lys4 from Pochonia chlamydosporia (strain 123) (Metacordyceps chlamydosporia).